Here is a 250-residue protein sequence, read N- to C-terminus: tRNA (guanine-N(1)-)-methyltransferase (250 aa).

S-adenosyl-L-methionine-binding positions include glycine 116 and 136–141; that span reads IGDYVL.

It belongs to the RNA methyltransferase TrmD family. Homodimer.

The protein localises to the cytoplasm. The enzyme catalyses guanosine(37) in tRNA + S-adenosyl-L-methionine = N(1)-methylguanosine(37) in tRNA + S-adenosyl-L-homocysteine + H(+). Functionally, specifically methylates guanosine-37 in various tRNAs. This Pseudomonas syringae pv. tomato (strain ATCC BAA-871 / DC3000) protein is tRNA (guanine-N(1)-)-methyltransferase.